Consider the following 334-residue polypeptide: Formamidase (334 aa).

The CN hydrolase domain occupies 14–260 (FLVAAIQFPV…WEIVTGEIYP (247 aa)). Residue E60 is the Proton acceptor of the active site. K133 acts as the Proton donor in catalysis. C166 serves as the catalytic Nucleophile.

This sequence belongs to the carbon-nitrogen hydrolase superfamily. Aliphatic amidase family.

The enzyme catalyses formamide + H2O = formate + NH4(+). Is an aliphatic amidase with a restricted substrate specificity, as it only hydrolyzes formamide. In Helicobacter acinonychis (strain Sheeba), this protein is Formamidase.